Reading from the N-terminus, the 150-residue chain is 1,4-dihydroxy-2-naphthoyl-CoA hydrolase (150 aa).

D19 is an active-site residue.

This sequence belongs to the 4-hydroxybenzoyl-CoA thioesterase family. DHNA-CoA hydrolase subfamily.

It carries out the reaction 1,4-dihydroxy-2-naphthoyl-CoA + H2O = 1,4-dihydroxy-2-naphthoate + CoA + H(+). It participates in cofactor biosynthesis; phylloquinone biosynthesis. Its pathway is quinol/quinone metabolism; 1,4-dihydroxy-2-naphthoate biosynthesis; 1,4-dihydroxy-2-naphthoate from chorismate: step 7/7. In terms of biological role, catalyzes the hydrolysis of 1,4-dihydroxy-2-naphthoyl-CoA (DHNA-CoA) to 1,4-dihydroxy-2-naphthoate (DHNA), a reaction involved in phylloquinone (vitamin K1) biosynthesis. This is 1,4-dihydroxy-2-naphthoyl-CoA hydrolase from Prochlorococcus marinus (strain MIT 9515).